A 482-amino-acid chain; its full sequence is High affinity 3',5'-cyclic-AMP phosphodiesterase 7A (482 aa).

Phosphoserine is present on S84. The 323-residue stretch at 136-458 (LDDDYNGQAK…ASWKGLQREQ (323 aa)) folds into the PDEase domain. The active-site Proton donor is H212. A divalent metal cation contacts are provided by H216, H252, D253, and D362.

Belongs to the cyclic nucleotide phosphodiesterase family. PDE7 subfamily. Interacts with CBFA2T3. A divalent metal cation serves as cofactor. Found at high levels in skeletal muscle and at low levels in a variety of tissues including brain and heart. It is expressed as well in two T-cell lines. As to expression, found abundantly in skeletal muscle and at low levels in heart.

The protein localises to the cytoplasm. It localises to the cytosol. The enzyme catalyses 3',5'-cyclic AMP + H2O = AMP + H(+). The protein operates within purine metabolism; 3',5'-cyclic AMP degradation; AMP from 3',5'-cyclic AMP: step 1/1. Insensitive to all selective PDE inhibitors. Hydrolyzes the second messenger cAMP, which is a key regulator of many important physiological processes. May have a role in muscle signal transduction. The protein is High affinity 3',5'-cyclic-AMP phosphodiesterase 7A of Homo sapiens (Human).